Consider the following 213-residue polypeptide: Thymidylate kinase (213 aa).

Gly-10–Thr-17 is an ATP binding site.

The protein belongs to the thymidylate kinase family.

The catalysed reaction is dTMP + ATP = dTDP + ADP. In terms of biological role, phosphorylation of dTMP to form dTDP in both de novo and salvage pathways of dTTP synthesis. The chain is Thymidylate kinase from Escherichia coli O157:H7 (strain EC4115 / EHEC).